We begin with the raw amino-acid sequence, 310 residues long: M1-specific T cell receptor beta chain (310 aa).

The signal sequence occupies residues 1 to 21 (MSNQVLCCVVLCLLGANTVDG). The tract at residues 22–114 (GITQSPKYLF…TAFYLCASSI (93 aa)) is t cell receptor beta variable 19. The 98-residue stretch at 34 to 131 (EGQNVTLSCE…FGPGTRLTVT (98 aa)) folds into the Ig-like V-type domain. Residue asparagine 37 is glycosylated (N-linked (GlcNAc...) asparagine). A disulfide bridge connects residues cysteine 42 and cysteine 110. The interval 46 to 50 (LNHDA) is CDR1. Aspartate 49 contacts a peptide antigen. Residues 68–73 (SQIVND) are CDR2. Residues 110–122 (CASSIRSSYEQYF) are CDR3. The interval 117–131 (SYEQYFGPGTRLTVT) is t cell receptor beta joining 2-7. The segment at 133–310 (DLKNVFPPKV…AMVKRKDSRG (178 aa)) is t cell receptor beta constant 2. The region spanning 140-249 (PKVAVFEPSE…WTQDRAKPVT (110 aa)) is the Ig-like C1-type domain. Cysteine 162 and cysteine 227 are oxidised to a cystine. The N-linked (GlcNAc...) asparagine glycan is linked to asparagine 201. Residues 262-276 (CGFTSESYQQGVLSA) are connecting peptide. The helical transmembrane segment at 277–299 (TILYEILLGKATLYAVLVSALVL) threads the bilayer. Residues 300–310 (MAMVKRKDSRG) lie on the Cytoplasmic side of the membrane.

In terms of assembly, disulfide-linked heterodimer with TRAV27*01J42*01C*01 alpha chain. The TR primarily interacts via its CDR3-beta domain with M/matrix protein 1-derived peptide (GILGFVFTL) displayed by HLA-A*02.01 in a 'peg-notch' recognition mode. The alpha-beta TR associates with the transmembrane signaling CD3 coreceptor proteins to form the TR-CD3 (TCR). The assembly of alpha-beta TR heterodimers with CD3 occurs in the endoplasmic reticulum where a single alpha-beta TR heterodimer associates with one CD3D-CD3E heterodimer, one CD3G-CD3E heterodimer and one CD247 homodimer forming a stable octameric structure. CD3D-CD3E and CD3G-CD3E heterodimers preferentially associate with TR alpha and TR beta chains (via TM domain), respectively. The association of the CD247 homodimer is the last step of TCR assembly in the endoplasmic reticulum and is required for transport to the cell surface. Expressed in M/matrix protein 1-specific effector memory CD8-positive T cells readily detectable in the peripheral blood, secondary lymphoid organs and lung (primary site of infection) of IAV infected individuals.

It localises to the cell membrane. Its function is as follows. The beta chain of TRAV27*01J42*01C*01/TRBV19*01J2S7*01C*02 alpha-beta T cell receptor (TR) clonotype that is specific for HLA-A*02:01-restricted M/matrix protein 1 immunodominant epitope GILGFVFTL of influenza A virus (IAV). Classified as a public TCR clonotype, it is preferentially selected in effector memory CD8-positive T cells among multiple HLA-A*02:01 carriers/individuals and confers long-lived immunity against IAV infection. Can cross-recognize sporadically emerging IAV variants by molecular mimicry, inducing immunity toward different influenza strains. Antigen recognition initiates TR-CD3 clustering on the cell surface and intracellular activation of LCK that phosphorylates the ITAM motifs of CD3G, CD3D, CD3E and CD247 enabling the recruitment of ZAP70. In turn, ZAP70 phosphorylates LAT, which recruits numerous signaling molecules to form the LAT signalosome. The LAT signalosome propagates signal branching to three major signaling pathways, the calcium, the mitogen-activated protein kinase (MAPK) kinase and the nuclear factor NF-kappa-B (NF-kB) pathways, leading to the mobilization of transcription factors that are critical for gene expression and essential for T cell differentiation into effector/memory T cells. In Homo sapiens (Human), this protein is M1-specific T cell receptor beta chain.